Reading from the N-terminus, the 342-residue chain is N-acetyl-gamma-glutamyl-phosphate reductase (342 aa).

C149 is a catalytic residue.

It belongs to the NAGSA dehydrogenase family. Type 1 subfamily.

Its subcellular location is the cytoplasm. It catalyses the reaction N-acetyl-L-glutamate 5-semialdehyde + phosphate + NADP(+) = N-acetyl-L-glutamyl 5-phosphate + NADPH + H(+). The protein operates within amino-acid biosynthesis; L-arginine biosynthesis; N(2)-acetyl-L-ornithine from L-glutamate: step 3/4. Catalyzes the NADPH-dependent reduction of N-acetyl-5-glutamyl phosphate to yield N-acetyl-L-glutamate 5-semialdehyde. The protein is N-acetyl-gamma-glutamyl-phosphate reductase of Roseobacter denitrificans (strain ATCC 33942 / OCh 114) (Erythrobacter sp. (strain OCh 114)).